The sequence spans 288 residues: ATP synthase gamma chain (288 aa).

The protein belongs to the ATPase gamma chain family. In terms of assembly, F-type ATPases have 2 components, CF(1) - the catalytic core - and CF(0) - the membrane proton channel. CF(1) has five subunits: alpha(3), beta(3), gamma(1), delta(1), epsilon(1). CF(0) has three main subunits: a, b and c.

Its subcellular location is the cell membrane. Produces ATP from ADP in the presence of a proton gradient across the membrane. The gamma chain is believed to be important in regulating ATPase activity and the flow of protons through the CF(0) complex. In Staphylococcus haemolyticus (strain JCSC1435), this protein is ATP synthase gamma chain.